Reading from the N-terminus, the 240-residue chain is Sec-independent protein translocase protein TatC (240 aa).

A run of 6 helical transmembrane segments spans residues 15-35 (IISIIAFLIGSGIAFYFAKYV), 61-81 (LFILIKISLAVGFIIASPVIL), 103-123 (LLLGSILLFMLGALFAYFIVL), 152-172 (FVLKLVVAFGIAFEMPIVLYV), 191-211 (FIVIAFVIGAIIAPDVSTQVL), and 212-232 (MAIPLLLLYEISIFLGKLATR).

This sequence belongs to the TatC family. In terms of assembly, forms a complex with TatA.

The protein localises to the cell inner membrane. Its function is as follows. Part of the twin-arginine translocation (Tat) system that transports large folded proteins containing a characteristic twin-arginine motif in their signal peptide across membranes. This Aquifex aeolicus (strain VF5) protein is Sec-independent protein translocase protein TatC.